Reading from the N-terminus, the 110-residue chain is Early E3B 12.7 kDa protein (110 aa).

A signal peptide spans Met-1–Ala-16. Residues Tyr-37–Leu-57 traverse the membrane as a helical segment.

Belongs to the adenoviridae E3_14 family. Post-translationally, phosphorylated on serine; O-glycosylated, but not N-glycosylated.

The protein localises to the host membrane. Down-regulates the EGF receptor and prevents cytolysis by TNF. This chain is Early E3B 12.7 kDa protein, found in Homo sapiens (Human).